A 294-amino-acid polypeptide reads, in one-letter code: Eukaryotic translation initiation factor 3 subunit F (294 aa).

The MPN domain occupies valine 7–glycine 155.

Belongs to the eIF-3 subunit F family. Component of the eukaryotic translation initiation factor 3 (eIF-3) complex.

It localises to the cytoplasm. Its function is as follows. Component of the eukaryotic translation initiation factor 3 (eIF-3) complex, which is involved in protein synthesis of a specialized repertoire of mRNAs and, together with other initiation factors, stimulates binding of mRNA and methionyl-tRNAi to the 40S ribosome. The eIF-3 complex specifically targets and initiates translation of a subset of mRNAs involved in cell proliferation. In Caenorhabditis elegans, this protein is Eukaryotic translation initiation factor 3 subunit F.